The primary structure comprises 469 residues: Gamma-aminobutyric acid permease (469 aa).

Over 1 to 17 (MNQSQSGLKKELKTRHM) the chain is Cytoplasmic. The chain crosses the membrane as a helical span at residues 18 to 38 (TMISIAGVIGAGLFVGSGSVI). Histidine 39 is a topological domain (extracellular). A helical membrane pass occupies residues 40 to 60 (STGPGAVVSYALAGLLVIFIM). Topologically, residues 61–94 (RMLGEMSAVNPTSGSFSQYAHDAIGPWAGFTIGW) are cytoplasmic. The chain crosses the membrane as a helical span at residues 95–115 (LYWFFWVIVIAIEAIAGAGII). Position 116 (glutamine 116) is a topological domain, extracellular. The helical transmembrane segment at 117-137 (YWFHDIPLWLTSLILTIVLTL) threads the bilayer. The Cytoplasmic segment spans residues 138-157 (TNVYSVKSFGEFEYWFSLIK). A helical membrane pass occupies residues 158-178 (VVTIIAFLIVGFAFIFGFAPG). The Extracellular segment spans residues 179–200 (SEPVGFSNLTGKGGFFPEGISS). A helical membrane pass occupies residues 201-221 (VLLGIVVVIFSFMGTEIVAIA). Over 222–242 (AGETSNPIESVTKATRSVVWR) the chain is Cytoplasmic. A helical membrane pass occupies residues 243 to 263 (IIVFYVGSIAIVVALLPWNSA). Topologically, residues 264–269 (NILESP) are extracellular. A helical transmembrane segment spans residues 270–290 (FVAVLEHIGVPAAAQIMNFIV). Residues 291–328 (LTAVLSCLNSGLYTTSRMLYSLAERNEAPRRFMKLSKK) lie on the Cytoplasmic side of the membrane. Residues 329-349 (GVPVQAIVAGTFFSYIAVVMN) traverse the membrane as a helical segment. Residues 350–355 (YFSPDT) lie on the Extracellular side of the membrane. A helical membrane pass occupies residues 356 to 376 (VFLFLVNSSGAIALLVYLVIA). Over 377–401 (VSQLKMRKKLEKTNPEALKIKMWLF) the chain is Cytoplasmic. Residues 402 to 422 (PFLTYLTIIAICGILVSMAFI) traverse the membrane as a helical segment. Topologically, residues 423–425 (DSM) are extracellular. Residues 426 to 446 (RDELLLTGVITGIVLISYLVF) traverse the membrane as a helical segment. The Cytoplasmic portion of the chain corresponds to 447–469 (RKRKVSEKAAANPVTQQQPDILP).

The protein belongs to the amino acid-polyamine-organocation (APC) superfamily. Amino acid transporter (AAT) (TC 2.A.3.1) family.

It is found in the cell membrane. It carries out the reaction 4-aminobutanoate(in) + H(+)(in) = 4-aminobutanoate(out) + H(+)(out). It catalyses the reaction beta-alanine(in) + H(+)(in) = beta-alanine(out) + H(+)(out). Its pathway is amino-acid degradation; 4-aminobutanoate degradation. Transporter for gamma-aminobutyrate (GABA). Can also transport beta-alanine. Can translocate several open-chain GABA analogs (3-aminobutyrate, 3-aminopropanoate, cis-4-aminobutenoate) across the membrane via counterflow against GABA, but cannot transport muscimol. Also functions as a low-affinity proline importer. The chain is Gamma-aminobutyric acid permease from Bacillus subtilis (strain 168).